Reading from the N-terminus, the 591-residue chain is ATPase family AAA domain-containing protein 3A (591 aa).

A disordered region spans residues Met1–Thr52. Ser2 carries the N-acetylserine modification. Residues Ser2–Phe49 are required for interaction with the inner surface of the mitochondrial outer membrane. The Mitochondrial intermembrane portion of the chain corresponds to Ser2–Lys245. A compositionally biased stretch (basic and acidic residues) spans Gly31–Ser47. Positions Glu55–Glu216 form a coiled coil. The chain crosses the membrane as a helical span at residues Val246–Ala263. The Mitochondrial matrix segment spans residues Lys264–Pro586. Residues Arg289–Arg304 are S100B-binding. ATP is bound at residue Gly351–Thr358. An N6-acetyllysine; alternate modification is found at Lys490. Lys490 is modified (N6-succinyllysine; alternate). Residues Lys494 and Lys512 each carry the N6-acetyllysine modification. A disordered region spans residues Lys572–Cys591.

Belongs to the AAA ATPase family. As to quaternary structure, can form homooligomers. Homodimer formation at the N-terminus may be regulated by ATP and is required for the interaction with the inner surface of the mitochondrial outer membrane and correct mitochondrial homeostasis. Interacts with components of the mitochondrial ribosome and with other proteins involved in mitochondrial RNA metabolism. May also interact with protein involved in lipid metabolism, including STARD9. May interact with FAM210A. Interacts with GADD45GIP1. Interacts with S100B in a Ca(+2)- and Zn(+2)-dependent manner; this interaction probably occurs in the cytosol prior to mitochondrial targeting. S100B could assist ATAD3A cytoplasmic processing, preventing aggregation and favoring mitochondrial localization. Interacts with HSP60/HSPD1. Interacts with CLPB. Interacts with EIF2AK3/PERK; ATAD3A and EIF2S1/eIF-2-alpha occupy a common binding site within the cytoplasmic loop of EIF2AK3/PERK, leading to prevent EIF2AK3/PERK association with its substrate EIF2S1/eIF-2-alpha. In terms of tissue distribution, expressed in heart, spleen, kidney, liver and at smaller levels, in lung and muscle (at protein level).

It localises to the mitochondrion inner membrane. Its subcellular location is the mitochondrion matrix. The protein resides in the mitochondrion nucleoid. It carries out the reaction ATP + H2O = ADP + phosphate + H(+). Essential for mitochondrial network organization, mitochondrial metabolism and cell growth at organism and cellular level. May play an important role in mitochondrial protein synthesis. May also participate in mitochondrial DNA replication. May bind to mitochondrial DNA D-loops and contribute to nucleoid stability. Required for enhanced channeling of cholesterol for hormone-dependent steroidogenesis. Involved in mitochondrial-mediated antiviral innate immunity. Required to protect mitochondria from the PERK-mediated unfolded protein response: specifically inhibits the activity of EIF2AK3/PERK at mitochondria-endoplasmic reticulum contact sites, thereby providing a safe haven for mitochondrial protein translation during endoplasmic reticulum stress. Ability to inhibit EIF2AK3/PERK is independent of its ATPase activity. Also involved in the mitochondrial DNA damage response by promoting signaling between damaged genomes and the mitochondrial membrane, leading to activation of the integrated stress response (ISR). The protein is ATPase family AAA domain-containing protein 3A (Atad3a) of Mus musculus (Mouse).